A 760-amino-acid chain; its full sequence is Pentatricopeptide repeat-containing protein At1g20230 (760 aa).

PPR repeat units lie at residues 49-79, 80-114, 115-149, 150-180, 181-215, 216-250, 251-285, 286-316, 317-351, 352-386, 387-421, 422-452, 453-487, 488-523, and 524-554; these read DGYI…IPDP, TIYS…GLIP, DSHV…GLDM, DAFV…MSDK, DVVT…GIEA, NIVS…GFCP, DQVT…GLLK, DKCV…FEMM, EAGV…TMEL, NVVS…GVKP, NHVT…HLLD, NVHV…MPTK, NLVC…RLKP, DFIS…GIKP, and RLEH…MPFE. Residues 559-634 form a type E motif region; that stretch reads VWGALLNSCR…NPGCSWIQVK (76 aa). The type E(+) motif stretch occupies residues 635–665; that stretch reads NRVYTLLAGDKSHPQIDQITEKMDEISKEMR. Residues 666–760 form a type DYW motif region; sequence KSGHRPNLDF…DGICSCGDFW (95 aa).

Belongs to the PPR family. PCMP-H subfamily.

This is Pentatricopeptide repeat-containing protein At1g20230 (PCMP-H21) from Arabidopsis thaliana (Mouse-ear cress).